The following is a 465-amino-acid chain: 28S rRNA (cytosine-C(5))-methyltransferase (465 aa).

Glycine 2 is subject to N-acetylglycine. At serine 167 the chain carries Phosphoserine. S-adenosyl-L-methionine is bound by residues 234–240 (CAAPGNK), aspartate 258, arginine 263, and aspartate 305. Cysteine 359 (nucleophile) is an active-site residue. A disordered region spans residues 430 to 465 (TPAPQTDAMDPEPLSQVPKRKRRRKAAVGASMQPST).

This sequence belongs to the class I-like SAM-binding methyltransferase superfamily. RsmB/NOP family. In terms of tissue distribution, in the hippocampus, specifically expressed in adult hippocampal NG2-positive oligodendrocyte precursor cells (at protein level).

Its subcellular location is the nucleus. It localises to the nucleolus. The catalysed reaction is a cytidine in 28S rRNA + S-adenosyl-L-methionine = a 5-methylcytidine in 28S rRNA + S-adenosyl-L-homocysteine + H(+). Its function is as follows. S-adenosyl-L-methionine-dependent methyltransferase that specifically methylates the C(5) position of cytosine 3438 (m5C3438) in 28S rRNA. m5C3782 promotes protein translation without affecting ribosome biogenesis and fidelity. Required for corpus callosum and cerebral cortex development. The chain is 28S rRNA (cytosine-C(5))-methyltransferase from Mus musculus (Mouse).